A 140-amino-acid polypeptide reads, in one-letter code: Transmembrane protein 107 (140 aa).

A run of 2 helical transmembrane segments spans residues 7–27 (LVPSRFLTLLAHLVVVITLFW) and 53–73 (LVAALSVTLGLFAVELAGFLS). Residue asparagine 79 is glycosylated (N-linked (GlcNAc...) asparagine). Transmembrane regions (helical) follow at residues 83–103 (SLISIGAHCSASVALSFFIFE) and 113–133 (IFVFCSALPAVTEMALFVTVF).

Part of the tectonic-like complex (also named B9 complex). Interacts with TMEM237, TMEM231, MKS1 and TMEM216.

Its subcellular location is the membrane. The protein resides in the cell projection. It localises to the cilium. Its function is as follows. Plays a role in cilia formation and embryonic patterning. Requires for normal Sonic hedgehog (Shh) signaling in the neural tube and acts in combination with GLI2 and GLI3 to pattern ventral and intermediate neuronal cell types. During ciliogenesis regulates the ciliary transition zone localization of some MKS complex proteins. The polypeptide is Transmembrane protein 107 (Homo sapiens (Human)).